The sequence spans 81 residues: Delta-conotoxin-like Ac6.3 (81 aa).

Positions 1–22 (MKLTCVMIVAVLFLTAWTFVTA) are cleaved as a signal peptide. A propeptide spanning residues 23–51 (DDSRNGLENLSPKARHEMKNPEASKSNKR) is cleaved from the precursor. Intrachain disulfides connect Cys-54–Cys-69, Cys-61–Cys-73, and Cys-68–Cys-78.

Belongs to the conotoxin O1 superfamily. As to expression, expressed by the venom duct.

It localises to the secreted. In terms of biological role, delta-conotoxins bind to site 6 of voltage-gated sodium channels (Nav) and inhibit the inactivation process. This is Delta-conotoxin-like Ac6.3 from Conus achatinus (Little frog cone).